Here is a 522-residue protein sequence, read N- to C-terminus: Glucans biosynthesis protein G (522 aa).

The signal sequence occupies residues 1 to 33 (MPNNKFFVKSSKASLRWLGATVLLTLYALPSWA).

The protein belongs to the OpgD/OpgG family.

The protein resides in the periplasm. It functions in the pathway glycan metabolism; osmoregulated periplasmic glucan (OPG) biosynthesis. Involved in the biosynthesis of osmoregulated periplasmic glucans (OPGs). The protein is Glucans biosynthesis protein G of Sodalis glossinidius (strain morsitans).